A 423-amino-acid polypeptide reads, in one-letter code: Histidine--tRNA ligase (423 aa).

The protein belongs to the class-II aminoacyl-tRNA synthetase family. In terms of assembly, homodimer.

The protein resides in the cytoplasm. The enzyme catalyses tRNA(His) + L-histidine + ATP = L-histidyl-tRNA(His) + AMP + diphosphate + H(+). This chain is Histidine--tRNA ligase, found in Rhodococcus jostii (strain RHA1).